Reading from the N-terminus, the 613-residue chain is Dihydroxy-acid dehydratase (613 aa).

D81 is a binding site for Mg(2+). C122 contacts [2Fe-2S] cluster. The Mg(2+) site is built by D123 and K124. At K124 the chain carries N6-carboxylysine. Residue C193 coordinates [2Fe-2S] cluster. E489 is a binding site for Mg(2+). The active-site Proton acceptor is the S515.

Belongs to the IlvD/Edd family. As to quaternary structure, homodimer. [2Fe-2S] cluster serves as cofactor. Mg(2+) is required as a cofactor.

The enzyme catalyses (2R)-2,3-dihydroxy-3-methylbutanoate = 3-methyl-2-oxobutanoate + H2O. It catalyses the reaction (2R,3R)-2,3-dihydroxy-3-methylpentanoate = (S)-3-methyl-2-oxopentanoate + H2O. The protein operates within amino-acid biosynthesis; L-isoleucine biosynthesis; L-isoleucine from 2-oxobutanoate: step 3/4. It participates in amino-acid biosynthesis; L-valine biosynthesis; L-valine from pyruvate: step 3/4. Its function is as follows. Functions in the biosynthesis of branched-chain amino acids. Catalyzes the dehydration of (2R,3R)-2,3-dihydroxy-3-methylpentanoate (2,3-dihydroxy-3-methylvalerate) into 2-oxo-3-methylpentanoate (2-oxo-3-methylvalerate) and of (2R)-2,3-dihydroxy-3-methylbutanoate (2,3-dihydroxyisovalerate) into 2-oxo-3-methylbutanoate (2-oxoisovalerate), the penultimate precursor to L-isoleucine and L-valine, respectively. The protein is Dihydroxy-acid dehydratase of Pseudomonas putida (strain ATCC 47054 / DSM 6125 / CFBP 8728 / NCIMB 11950 / KT2440).